We begin with the raw amino-acid sequence, 798 residues long: Penicillin-binding protein 1A (798 aa).

Residues 2–9 (IKKILTTC) are Cytoplasmic-facing. The chain crosses the membrane as a helical; Signal-anchor for type II membrane protein span at residues 10-30 (FGLFFGFCVFGVGLVAIAILV). At 31–798 (TYPKLPSLDS…SKQQQLDSLF (768 aa)) the chain is on the periplasmic side. Positions 50–218 (LTIYSADGEV…SAYNPIVNPE (169 aa)) are transglycosylase. Catalysis depends on Glu-88, which acts as the Proton donor; for transglycosylase activity. A transpeptidase region spans residues 378-700 (RRALGFAARA…GTIAVPVWVD (323 aa)). The active-site Acyl-ester intermediate; for transpeptidase activity is Ser-461. The tract at residues 739-798 (LMLDNSGIAPQPSRRAKEDDEAAVENEQQGRSDETRQDVQETPVLPSNTDSKQQQLDSLF) is disordered. Positions 766–777 (QQGRSDETRQDV) are enriched in basic and acidic residues. The span at 783–798 (LPSNTDSKQQQLDSLF) shows a compositional bias: polar residues.

It in the N-terminal section; belongs to the glycosyltransferase 51 family. In the C-terminal section; belongs to the transpeptidase family.

The protein localises to the cell inner membrane. The catalysed reaction is [GlcNAc-(1-&gt;4)-Mur2Ac(oyl-L-Ala-gamma-D-Glu-L-Lys-D-Ala-D-Ala)](n)-di-trans,octa-cis-undecaprenyl diphosphate + beta-D-GlcNAc-(1-&gt;4)-Mur2Ac(oyl-L-Ala-gamma-D-Glu-L-Lys-D-Ala-D-Ala)-di-trans,octa-cis-undecaprenyl diphosphate = [GlcNAc-(1-&gt;4)-Mur2Ac(oyl-L-Ala-gamma-D-Glu-L-Lys-D-Ala-D-Ala)](n+1)-di-trans,octa-cis-undecaprenyl diphosphate + di-trans,octa-cis-undecaprenyl diphosphate + H(+). It catalyses the reaction Preferential cleavage: (Ac)2-L-Lys-D-Ala-|-D-Ala. Also transpeptidation of peptidyl-alanyl moieties that are N-acyl substituents of D-alanine.. It functions in the pathway cell wall biogenesis; peptidoglycan biosynthesis. Its function is as follows. Cell wall formation. Synthesis of cross-linked peptidoglycan from the lipid intermediates. The enzyme has a penicillin-insensitive transglycosylase N-terminal domain (formation of linear glycan strands) and a penicillin-sensitive transpeptidase C-terminal domain (cross-linking of the peptide subunits). Essential for cell wall synthesis. The sequence is that of Penicillin-binding protein 1A (mrcA) from Neisseria gonorrhoeae (strain ATCC 700825 / FA 1090).